A 423-amino-acid chain; its full sequence is Serine hydroxymethyltransferase (423 aa).

(6S)-5,6,7,8-tetrahydrofolate contacts are provided by residues L121 and 125 to 127; that span reads GHL. N6-(pyridoxal phosphate)lysine is present on K230. 355 to 357 serves as a coordination point for (6S)-5,6,7,8-tetrahydrofolate; that stretch reads SPF.

The protein belongs to the SHMT family. In terms of assembly, homodimer. Pyridoxal 5'-phosphate serves as cofactor.

The protein resides in the cytoplasm. The enzyme catalyses (6R)-5,10-methylene-5,6,7,8-tetrahydrofolate + glycine + H2O = (6S)-5,6,7,8-tetrahydrofolate + L-serine. It participates in one-carbon metabolism; tetrahydrofolate interconversion. The protein operates within amino-acid biosynthesis; glycine biosynthesis; glycine from L-serine: step 1/1. Functionally, catalyzes the reversible interconversion of serine and glycine with tetrahydrofolate (THF) serving as the one-carbon carrier. This reaction serves as the major source of one-carbon groups required for the biosynthesis of purines, thymidylate, methionine, and other important biomolecules. Also exhibits THF-independent aldolase activity toward beta-hydroxyamino acids, producing glycine and aldehydes, via a retro-aldol mechanism. This is Serine hydroxymethyltransferase from Hydrogenovibrio crunogenus (strain DSM 25203 / XCL-2) (Thiomicrospira crunogena).